The chain runs to 335 residues: Ig gamma-2A chain C region secreted form (335 aa).

Ig-like domains are found at residues 6–98 (PSVY…KKIE), 126–225 (PSVF…KTIS), and 234–330 (PQVY…KTIS). A glycan (N-linked (GlcNAc...) asparagine) is linked at N185.

It localises to the secreted. This chain is Ig gamma-2A chain C region secreted form, found in Mus musculus (Mouse).